Here is a 427-residue protein sequence, read N- to C-terminus: Transcription termination factor Rho (427 aa).

The 75-residue stretch at 51–125 (LLFMEGVLEI…LHVEAVNGDD (75 aa)) folds into the Rho RNA-BD domain. ATP contacts are provided by residues 168 to 173 (GFGQRG), 180 to 185 (KAGKTM), and R211.

This sequence belongs to the Rho family. Homohexamer. The homohexamer assembles into an open ring structure.

In terms of biological role, facilitates transcription termination by a mechanism that involves Rho binding to the nascent RNA, activation of Rho's RNA-dependent ATPase activity, and release of the mRNA from the DNA template. The sequence is that of Transcription termination factor Rho from Bacillus subtilis (strain 168).